The chain runs to 113 residues: U11-theraphotoxin-Hhn1a (113 aa).

The signal sequence occupies residues 1-21 (MNTVRVAFLLVFVLAVSLGQA). A propeptide spanning residues 22–74 (DKDENRMEMQEKTEQGKSYLDFAENLLLQKLEEPEAKLLEEDSEESRNSRQKR) is cleaved from the precursor. A compositionally biased stretch (basic and acidic residues) spans 58 to 69 (KLLEEDSEESRN). The interval 58 to 83 (KLLEEDSEESRNSRQKRCIGEGVPCD) is disordered. 3 disulfides stabilise this stretch: Cys75-Cys90, Cys82-Cys95, and Cys89-Cys110.

The protein belongs to the neurotoxin 14 (magi-1) family. 01 (HNTX-16) subfamily. In terms of tissue distribution, expressed by the venom gland.

It is found in the secreted. Probable ion channel inhibitor. The protein is U11-theraphotoxin-Hhn1a of Cyriopagopus hainanus (Chinese bird spider).